Here is a 160-residue protein sequence, read N- to C-terminus: Major allergen Pru av 1 (160 aa).

Belongs to the BetVI family.

This Prunus avium (Cherry) protein is Major allergen Pru av 1 (PRUA1).